The chain runs to 610 residues: Dopamine beta-hydroxylase (610 aa).

Residues 1-9 are Cytoplasmic-facing; that stretch reads MQVPSPSVR. A helical; Signal-anchor for type II membrane protein transmembrane segment spans residues 10–30; that stretch reads EAASMYGTAVAVFLVILVAAL. Residues 31–610 lie on the Intragranular side of the membrane; that stretch reads QGSAPAESPF…TVLNISGGKG (580 aa). The 117-residue stretch at 50-166 folds into the DOMON domain; sequence GTLELSWNIS…GTVHLVYGFL (117 aa). Disulfide bonds link C147/C589, C225/C276, C262/C288, C383/C496, C387/C558, and C459/C481. The N-linked (GlcNAc...) asparagine glycan is linked to N177. The active site involves Y223. Cu(2+) contacts are provided by H255 and H256. Cu(2+) is bound by residues H326, H405, H407, and M480. The active site involves H405. Residue N559 is glycosylated (N-linked (GlcNAc...) asparagine). Positions 585–610 are disordered; it reads PTPHCPASQAQSPAGPTVLNISGGKG.

It belongs to the copper type II ascorbate-dependent monooxygenase family. In terms of assembly, homotetramer; composed of two disulfide-linked dimers. It depends on Cu(2+) as a cofactor. In terms of processing, proteolytic cleavage after the membrane-anchor leads to the release of the soluble form. Post-translationally, N-glycosylated. Detected in chromaffin granules in the adrenal medulla (at protein level). Detected in adrenal medulla.

It is found in the cytoplasmic vesicle. The protein localises to the secretory vesicle lumen. It localises to the secretory vesicle. Its subcellular location is the chromaffin granule lumen. The protein resides in the secretory vesicle membrane. It is found in the chromaffin granule membrane. The catalysed reaction is dopamine + 2 L-ascorbate + O2 = (R)-noradrenaline + 2 monodehydro-L-ascorbate radical + H2O. It functions in the pathway catecholamine biosynthesis; (R)-noradrenaline biosynthesis; (R)-noradrenaline from dopamine: step 1/1. Catalyzes the hydroxylation of dopamine to noradrenaline (also known as norepinephrine), and is thus vital for regulation of these neurotransmitters. This is Dopamine beta-hydroxylase (DBH) from Bos taurus (Bovine).